The sequence spans 137 residues: ATP synthase epsilon chain, chloroplastic (137 aa).

This sequence belongs to the ATPase epsilon chain family. In terms of assembly, F-type ATPases have 2 components, CF(1) - the catalytic core - and CF(0) - the membrane proton channel. CF(1) has five subunits: alpha(3), beta(3), gamma(1), delta(1), epsilon(1). CF(0) has three main subunits: a, b and c.

It localises to the plastid. Its subcellular location is the chloroplast thylakoid membrane. Produces ATP from ADP in the presence of a proton gradient across the membrane. This Sorghum bicolor (Sorghum) protein is ATP synthase epsilon chain, chloroplastic.